A 369-amino-acid chain; its full sequence is MAVDQESFVHLSRPLAPNVLGFGVSNAPLTVNIQPQAVFSIIDHAVRRDDRDTQSTRVIGALVGVRSEDGSEVEVRSTFAIPHTENEDQVEVDVEYQKNMLALTLKANPRETLLGWYTTSHELNSFSALIQNFFASPETGTFPHPAVHLTIGTEAGATIDTKTYISAPVAVSPERAAESCLFIEVPHKLLFTDAERGALGSVAAAADAESRSAPVVSDIENLAQALETVSDLLERVSGFVGEVLDEERDGNHALGQYLMNALSLAPKVSNLAIENDFNNHIQDVLMVSYLANTIRTQIELSQRLATAKLDEGKEGGEKKDGEGAEGDKKTDGQRGQRGQGGKRGGRSGGAGGRGGREQREPREPREAAE.

The 140-residue stretch at 31 to 170 (VNIQPQAVFS…TKTYISAPVA (140 aa)) folds into the MPN domain. Positions 309–334 (LDEGKEGGEKKDGEGAEGDKKTDGQR) are enriched in basic and acidic residues. The tract at residues 309–369 (LDEGKEGGEK…EPREPREAAE (61 aa)) is disordered. Gly residues predominate over residues 335–353 (GQRGQGGKRGGRSGGAGGR). A compositionally biased stretch (basic and acidic residues) spans 354–369 (GGREQREPREPREAAE).

It belongs to the eIF-3 subunit F family. As to quaternary structure, component of the eukaryotic translation initiation factor 3 (eIF-3) complex.

It is found in the cytoplasm. Functionally, component of the eukaryotic translation initiation factor 3 (eIF-3) complex, which is involved in protein synthesis of a specialized repertoire of mRNAs and, together with other initiation factors, stimulates binding of mRNA and methionyl-tRNAi to the 40S ribosome. The eIF-3 complex specifically targets and initiates translation of a subset of mRNAs involved in cell proliferation. In Neurospora crassa (strain ATCC 24698 / 74-OR23-1A / CBS 708.71 / DSM 1257 / FGSC 987), this protein is Eukaryotic translation initiation factor 3 subunit F.